The sequence spans 236 residues: Small ribosomal subunit protein uS3 (236 aa).

One can recognise a KH type-2 domain in the interval 38 to 106; that stretch reads LRRYLHTRLK…DIQINISEIK (69 aa). The tract at residues 211-236 is disordered; that stretch reads DLSPNVQAQQRKMKESPQQRRQRRGG.

Belongs to the universal ribosomal protein uS3 family. As to quaternary structure, part of the 30S ribosomal subunit. Forms a tight complex with proteins S10 and S14.

Functionally, binds the lower part of the 30S subunit head. Binds mRNA in the 70S ribosome, positioning it for translation. The sequence is that of Small ribosomal subunit protein uS3 from Salinibacter ruber (strain DSM 13855 / M31).